The chain runs to 686 residues: Cyclic nucleotide-gated channel alpha-1 (686 aa).

The Cytoplasmic portion of the chain corresponds to 1 to 165 (MKNNIINTQQ…PSGNTYYNWL (165 aa)). Disordered stretches follow at residues 31–75 (ENGA…PSQR) and 87–149 (NVNN…EEKK). Positions 39 to 53 (SEDDDSASTSEESEN) are enriched in acidic residues. The segment covering 110–124 (SKSDDKNENKNDPEK) has biased composition (basic and acidic residues). A compositionally biased stretch (basic residues) spans 125 to 134 (KKKKKDKEKK). Basic and acidic residues predominate over residues 135–149 (KKEEKSKDKKEEEKK). Residues 166 to 187 (FCITLPVMYNWTMVIARACFDE) form a helical membrane-spanning segment. Topologically, residues 188–197 (LQSDYLEYWL) are extracellular. Residues 198–218 (ILDYVSDIVYLIDMFVRTRTG) form a helical membrane-spanning segment. Topologically, residues 219-243 (YLEQGLLVKEELKLINKYKSNLQFK) are cytoplasmic. The helical transmembrane segment at 244 to 262 (LDVLSLIPTDLLYFKLGWN) threads the bilayer. The Extracellular portion of the chain corresponds to 263–267 (YPEIR). Residues 268 to 286 (LNRLLRFSRMFEFFQRTET) form a helical membrane-spanning segment. The Cytoplasmic portion of the chain corresponds to 287-293 (RTNYPNI). Residues 291–399 (PNIFRISNLV…GNIGSMISNM (109 aa)) form an ion conduction pathway region. The helical transmembrane segment at 294–317 (FRISNLVMYIVIIIHWNACVFYSI) threads the bilayer. The Extracellular portion of the chain corresponds to 318–340 (SKAIGFGNDTWVYPDINDPEFGR). N-linked (GlcNAc...) asparagine glycosylation occurs at Asn325. 2 consecutive transmembrane segments (helical) span residues 341 to 375 (LARKYVYSLYWSTLTLTTIGETPPPVRDSEYVFVV) and 376 to 400 (VDFLIGVLIFATIVGNIGSMISNMN). The interval 358-361 (TIGE) is selectivity filter. A C-linker region spans residues 401–477 (AARAEFQARI…DTLKKVRIFA (77 aa)). At 401–686 (AARAEFQARI…GAESGPIDST (286 aa)) the chain is on the cytoplasmic side. The interval 481–601 (AGLLVELVLK…EEKGKQILMK (121 aa)) is cyclic nucleotide-binding domain. Residues Gly541, Ser544, Arg557, and Thr558 each contribute to the 3',5'-cyclic GMP site. The 3',5'-cyclic AMP site is built by Arg557 and Thr558. The stretch at 619 to 673 (LEEKVTRMEGSVDLLQTRFARILAEYESMQQKLKQRLTKVEKFLKPLIDTEFSSI) forms a coiled coil.

The protein belongs to the cyclic nucleotide-gated cation channel (TC 1.A.1.5) family. CNGA1 subfamily. In terms of assembly, forms heterotetrameric channels composed of CNGA1 and CNGB1 subunits with 3:1 stoichiometry. May also form cyclic nucleotide-activated homotetrameric channels, that are efficiently activated by saturating cGMP, but poorly activated by saturating cAMP compared to the heterotetramer with CNGB1. The channel binds Ca(2+)-bound CALM1 via CaM1 and CaM2 regions of the CNGB1 subunit; this interaction modulates the affinity of the channel for cNMPs in response to intracellular Ca(2+) levels. As to expression, rod cells in the retina.

The protein localises to the cell membrane. The enzyme catalyses Ca(2+)(in) = Ca(2+)(out). It catalyses the reaction Na(+)(in) = Na(+)(out). It carries out the reaction K(+)(in) = K(+)(out). The catalysed reaction is NH4(+)(in) = NH4(+)(out). The enzyme catalyses Rb(+)(in) = Rb(+)(out). It catalyses the reaction Li(+)(in) = Li(+)(out). It carries out the reaction Cs(+)(in) = Cs(+)(out). With respect to regulation, channel opening is activated by cGMP and at a much lesser extent by cAMP. Ca(2+) binding concominantly blocks monovalent cation currents. Inhibited by L-cis-diltiazem. Functionally, pore-forming subunit of the rod cyclic nucleotide-gated channel. Mediates rod photoresponses at dim light converting transient changes in intracellular cGMP levels into electrical signals. In the dark, cGMP levels are high and keep the channel open enabling a steady inward current carried by Na(+) and Ca(2+) ions that leads to membrane depolarization and neurotransmitter release from synaptic terminals. Upon photon absorption cGMP levels decline leading to channel closure and membrane hyperpolarization that ultimately slows neurotransmitter release and signals the presence of light, the end point of the phototransduction cascade. Conducts cGMP- and cAMP-gated ion currents, with permeability for monovalent and divalent cations. The selectivity for Ca(2+) over Na(+) increases with cGMP concentrations, whereas the selectivity among monovalent ions is independent of the cGMP levels. The chain is Cyclic nucleotide-gated channel alpha-1 from Homo sapiens (Human).